A 364-amino-acid chain; its full sequence is Probable transcription factor At4g00390 (364 aa).

Positions 1 to 149 are disordered; that stretch reads MTKKLDPPTA…STKRVKKDEE (149 aa). Residues 13 to 32 are compositionally biased toward acidic residues; the sequence is SDEDDVETSEDDSSSSEEDE. The span at 39-80 shows a compositional bias: low complexity; that stretch reads ATTAAAPAKSTAVSAATPAKSTSVSAAAPSKSTAVSAAADSD. Positions 81 to 93 are enriched in acidic residues; that stretch reads SGSESETDSDSES.

Belongs to the GeBP family.

The polypeptide is Probable transcription factor At4g00390 (Arabidopsis thaliana (Mouse-ear cress)).